Reading from the N-terminus, the 184-residue chain is Large ribosomal subunit protein uL18 (184 aa).

This sequence belongs to the universal ribosomal protein uL18 family. Part of the 50S ribosomal subunit. Contacts the 5S and 23S rRNAs.

This is one of the proteins that bind and probably mediate the attachment of the 5S RNA into the large ribosomal subunit, where it forms part of the central protuberance. The sequence is that of Large ribosomal subunit protein uL18 from Haloferax mediterranei (strain ATCC 33500 / DSM 1411 / JCM 8866 / NBRC 14739 / NCIMB 2177 / R-4) (Halobacterium mediterranei).